The chain runs to 231 residues: Uridylate kinase (231 aa).

6 to 9 contacts ATP; sequence KLSG. Positions 14–19 are involved in allosteric activation by GTP; that stretch reads GEGGRG. Positions 49 and 53 each coordinate ATP. UMP contacts are provided by residues aspartate 66 and 127-134; that span reads TSNPFFTT. Threonine 154, tyrosine 160, and aspartate 163 together coordinate ATP.

The protein belongs to the UMP kinase family. Homohexamer.

The protein localises to the cytoplasm. It catalyses the reaction UMP + ATP = UDP + ADP. The protein operates within pyrimidine metabolism; CTP biosynthesis via de novo pathway; UDP from UMP (UMPK route): step 1/1. With respect to regulation, allosterically activated by GTP. Inhibited by UTP. Its function is as follows. Catalyzes the reversible phosphorylation of UMP to UDP. This is Uridylate kinase from Thermotoga maritima (strain ATCC 43589 / DSM 3109 / JCM 10099 / NBRC 100826 / MSB8).